A 1120-amino-acid chain; its full sequence is Putative GTPase-activating protein AN11010 (1120 aa).

The Rab-GAP TBC domain occupies Gly-291–Gly-479. Disordered stretches follow at residues Asp-673 to Ala-702, Asp-859 to Pro-903, Ala-960 to Ile-979, Arg-1017 to Arg-1068, and Gly-1081 to Ser-1120. Residues Glu-864–Ser-878 show a composition bias toward low complexity. Polar residues predominate over residues Ala-960–Pro-970. Over residues Asp-1023–Asp-1032 the composition is skewed to acidic residues. Composition is skewed to basic and acidic residues over residues Asp-1057–Arg-1068 and Gly-1081–Gln-1095.

In Emericella nidulans (strain FGSC A4 / ATCC 38163 / CBS 112.46 / NRRL 194 / M139) (Aspergillus nidulans), this protein is Putative GTPase-activating protein AN11010.